The sequence spans 153 residues: Ribonuclease P protein component (153 aa).

The protein belongs to the RnpA family. As to quaternary structure, consists of a catalytic RNA component (M1 or rnpB) and a protein subunit.

It catalyses the reaction Endonucleolytic cleavage of RNA, removing 5'-extranucleotides from tRNA precursor.. Functionally, RNaseP catalyzes the removal of the 5'-leader sequence from pre-tRNA to produce the mature 5'-terminus. It can also cleave other RNA substrates such as 4.5S RNA. The protein component plays an auxiliary but essential role in vivo by binding to the 5'-leader sequence and broadening the substrate specificity of the ribozyme. This chain is Ribonuclease P protein component, found in Helicobacter acinonychis (strain Sheeba).